The sequence spans 581 residues: Prolactin receptor (581 aa).

The first 24 residues, 1 to 24, serve as a signal peptide directing secretion; sequence MKENAASRVVFILLLFLSVSLLNG. Residues 25 to 237 lie on the Extracellular side of the membrane; that stretch reads QSPPEKPKLV…NDFPVKDTSM (213 aa). 2 Fibronectin type-III domains span residues 27-127 and 129-229; these read PPEK…IVEP and PPAN…IPND. Cys36 and Cys46 are disulfide-bonded. Residue Asn59 is glycosylated (N-linked (GlcNAc...) asparagine). Residues Cys75 and Cys86 are joined by a disulfide bond. N-linked (GlcNAc...) asparagine glycosylation occurs at Asn132. Zn(2+) is bound by residues Asp211 and His212. A WSXWS motif motif is present at residues 215 to 219; it reads WSEWS. The chain crosses the membrane as a helical span at residues 238 to 258; sequence WIFVAILSAVICLIMVWAVAL. Residues 259–581 lie on the Cytoplasmic side of the membrane; that stretch reads KGYSMVTCIL…PAKKAPPALP (323 aa). The Box 1 motif signature appears at 267–275; it reads ILPPVPGPK. Disordered regions lie at residues 324-384 and 458-499; these read QLMP…EKLE and DQHA…PRPQ. Composition is skewed to basic and acidic residues over residues 329-349, 375-384, and 469-483; these read PSKEHTEQGVKPMHLDLDSDS, HTPEGPEKLE, and ETGREGKATKQRESE.

It belongs to the type I cytokine receptor family. Type 1 subfamily. As to quaternary structure, interacts with SMARCA1. Interacts with NEK3 and VAV2 and this interaction is prolactin-dependent. Expressed in all tissues examined; liver, peripheral blood lymphocytes, endometrium, corpus luteum, intestine, fetal thymus, fetal spleen, fetal liver and fetal brain.

The protein resides in the membrane. Functionally, this is a receptor for the anterior pituitary hormone prolactin. This chain is Prolactin receptor (PRLR), found in Bos taurus (Bovine).